Reading from the N-terminus, the 144-residue chain is Large ribosomal subunit protein uL11 (144 aa).

This sequence belongs to the universal ribosomal protein uL11 family. Part of the ribosomal stalk of the 50S ribosomal subunit. Interacts with L10 and the large rRNA to form the base of the stalk. L10 forms an elongated spine to which L12 dimers bind in a sequential fashion forming a multimeric L10(L12)X complex. Post-translationally, one or more lysine residues are methylated.

Functionally, forms part of the ribosomal stalk which helps the ribosome interact with GTP-bound translation factors. The polypeptide is Large ribosomal subunit protein uL11 (Neisseria meningitidis serogroup C (strain 053442)).